A 232-amino-acid polypeptide reads, in one-letter code: Ubiquinone biosynthesis O-methyltransferase (232 aa).

Residues Arg-36, Gly-55, Asp-76, and Leu-120 each contribute to the S-adenosyl-L-methionine site.

Belongs to the methyltransferase superfamily. UbiG/COQ3 family.

It carries out the reaction a 3-demethylubiquinol + S-adenosyl-L-methionine = a ubiquinol + S-adenosyl-L-homocysteine + H(+). The catalysed reaction is a 3-(all-trans-polyprenyl)benzene-1,2-diol + S-adenosyl-L-methionine = a 2-methoxy-6-(all-trans-polyprenyl)phenol + S-adenosyl-L-homocysteine + H(+). It functions in the pathway cofactor biosynthesis; ubiquinone biosynthesis. Functionally, O-methyltransferase that catalyzes the 2 O-methylation steps in the ubiquinone biosynthetic pathway. The sequence is that of Ubiquinone biosynthesis O-methyltransferase from Pseudomonas savastanoi pv. phaseolicola (strain 1448A / Race 6) (Pseudomonas syringae pv. phaseolicola (strain 1448A / Race 6)).